The following is a 195-amino-acid chain: MTVQQLIQRLDQKVQQLYQAHLSKREEKIFAKFDRTLFSENGQNVSFYLKEINQTLDRIKTLESNDSNHYNFLAERLLAQCSVLSEALVRKNTHLTESQTTTKQTIQKSQHSIHKLPPRERLEKYYEAREQLNNLYRQHKDLAQAEKNNDEKIRYAQLAEVYKKRQQKCQDAIDLLEEYLVFKEEVENRENTENK.

The protein belongs to the PriC family. Monomer. Component of the replication restart primosome, which is composed of PriA, PriB, PriC, DnaB and DnaT; DnaG primase associates transiently with this complex. Interacts with the C-terminus of SSB; this interaction is required to load the main replicative helicase onto substrate replication forks. Interacts with helicase DnaB alone and in the DnaB-DnaC complex, probably 1:1 binding with DnaB.

Involved in the restart of stalled replication forks, which reloads the DnaB replicative helicase on sites other than the origin of replication. Recognizes abandoned replication forks and remodels DNA single-stranded binding protein (SSB) on ssDNA to uncover a loading site for DnaB. There are several restart pathways, the PriA-PriC pathway is a minor restart pathway. Part of the minor PriC-Rep pathway for restart of stalled replication forks, which has a different substrate specificity than PriA. Part of the major restart pathway with PriA, PriB, DnaB, DnaT and DnaG primase. priB and priC have redundant roles in the cell. The protein is Replication restart protein PriC of Haemophilus influenzae (strain ATCC 51907 / DSM 11121 / KW20 / Rd).